The primary structure comprises 365 residues: MARYWPEPAHTHGTPERTGILLVNLGTPAAPTAAAVRPYLKEFLSDPRVVEIPRAIWWPILNGVILNLRPKKSAEKYAAIWSDAGSPLKVHTERQAKLLAGYLGHAGVTSVVVDWAMRYGAPSISDILGRMKAEGCSRILVVPLYPQYAASTTASVIDEVAGCLTRWRNLPEIRYVRNFHDHPGYVGALARSVRDHWAKHGEPDQLVMSFHGIPKRSLDLGDPYHCECHVTARLLAAKLDLPPERWQLTFQSRFGKAEWLKPYTQPTLEALGRKGTGRVDVICPGFASDCLETLEEIALECRTAFLGAGGKAFHYIPCLNERHDWIAALTDIVRSRIGDWLEAPVPAAELLAATAQRARTAGAER.

Residues H211 and E292 each coordinate Fe cation.

Belongs to the ferrochelatase family.

The protein localises to the cytoplasm. It carries out the reaction heme b + 2 H(+) = protoporphyrin IX + Fe(2+). It functions in the pathway porphyrin-containing compound metabolism; protoheme biosynthesis; protoheme from protoporphyrin-IX: step 1/1. Catalyzes the ferrous insertion into protoporphyrin IX. The polypeptide is Ferrochelatase (Aromatoleum aromaticum (strain DSM 19018 / LMG 30748 / EbN1) (Azoarcus sp. (strain EbN1))).